The sequence spans 649 residues: Golgin subfamily A member 6-like protein 26 (649 aa).

Disordered stretches follow at residues 1-94 (MWPQ…HQEA), 300-330 (QEEKIREQEEKMRRQEEMMWEKEEKMRRQEE), 358-440 (EKMH…EMWR), 455-572 (KEKM…REQE), and 584-620 (EQEEMMQEQEEKMWEQEEKMCEQEEKMQEQEEKMRRQ). Residues 10–23 (HPHLPTHPHLPTHP) are compositionally biased toward low complexity. Residues 25 to 46 (MSKETRQSKLAEAKEQLTDHHP) are compositionally biased toward basic and acidic residues. 2 stretches are compositionally biased toward polar residues: residues 47–57 (QTNPSVGTAAS) and 65–77 (NNGTNPETTTSGG). Basic and acidic residues predominate over residues 80–94 (SPEDEQKASHQHQEA). Residues 151 to 644 (LEQALSAVAT…EEKMQEHQEH (494 aa)) are a coiled coil.

The protein belongs to the GOLGA6 family.

In Homo sapiens (Human), this protein is Golgin subfamily A member 6-like protein 26 (GOLGA6L26).